Consider the following 128-residue polypeptide: Glycine cleavage system H protein (128 aa).

In terms of domain architecture, Lipoyl-binding spans 23 to 105 (IGIVGITWFA…YGEGWILKLE (83 aa)). Lys-64 bears the N6-lipoyllysine mark.

This sequence belongs to the GcvH family. The glycine cleavage system is composed of four proteins: P, T, L and H. The cofactor is (R)-lipoate.

The glycine cleavage system catalyzes the degradation of glycine. The H protein shuttles the methylamine group of glycine from the P protein to the T protein. The chain is Glycine cleavage system H protein from Symbiobacterium thermophilum (strain DSM 24528 / JCM 14929 / IAM 14863 / T).